The sequence spans 780 residues: Lethal(3)malignant brain tumor-like protein 3 (780 aa).

Residues 1–64 (MTESASSTSG…VKKATATTTW (64 aa)) form an interaction with RBPJ. Required for transcription repressor activity on Notch target genes region. The disordered stretch occupies residues 149-220 (DKDQKEERDV…RKRRGDSAVL (72 aa)). Composition is skewed to acidic residues over residues 157-166 (DVEEDNEEED) and 185-194 (EDGEERDDEM). 3 MBT repeats span residues 232-332 (WCWA…LHPP), 340-439 (FNWQ…LITP), and 448-543 (FSWD…LQPP). Residues 549–593 (LMEASEHGGCSTPGCKGIGHFKRARHLGPHSAANCPYSEINLNKD) form a CCHHC-type; degenerate zinc finger. The disordered stretch occupies residues 597 to 665 (PDRLSGEMPP…GAREEPTVQQ (69 aa)). Residues 600 to 710 (LSGEMPPASP…PASKVSKWST (111 aa)) are interaction with DCAF5. Ser608 bears the Phosphoserine mark. Lys637 participates in a covalent cross-link: Glycyl lysine isopeptide (Lys-Gly) (interchain with G-Cter in SUMO2). Basic and acidic residues predominate over residues 643-661 (RTESEMRTSHEARGAREEP). Residue Lys704 forms a Glycyl lysine isopeptide (Lys-Gly) (interchain with G-Cter in SUMO2) linkage. Residues 708–772 (WSTDEVSEFI…FNSILMFKAA (65 aa)) form the SAM domain.

Interacts with RNF2. Interacts (via SAM domain) with SAMD1 (via SAM domain); the interaction mediates L3MBTL3 binding to chromatin. Interacts with RBPJ; the interaction is required for L3MBTL3 localization to chromatin and is impaired by Notch-derived peptides containing the intracellular domain (NICD). Interacts (via SAM domain) with KDM1A. Interacts with DCAF5. Interacts with DNMT1. Interacts with E2F1. Interacts with SOX2. Interacts with SFMBT1.

The protein resides in the nucleus. Functionally, is a negative regulator of Notch target genes expression, required for RBPJ-mediated transcriptional repression. It recruits KDM1A to Notch-responsive elements and promotes KDM1A-mediated H3K4me demethylation. Involved in the regulation of ubiquitin-dependent degradation of a set of methylated non-histone proteins, including SOX2, DNMT1 and E2F1. It acts as an adapter recruiting the CRL4-DCAF5 E3 ubiquitin ligase complex to methylated target proteins. Required for normal maturation of myeloid progenitor cells. The chain is Lethal(3)malignant brain tumor-like protein 3 from Homo sapiens (Human).